Reading from the N-terminus, the 297-residue chain is Ribosomal RNA small subunit methyltransferase H (297 aa).

S-adenosyl-L-methionine is bound by residues 30–32, aspartate 48, phenylalanine 75, aspartate 96, and glutamine 103; that span reads GGY.

This sequence belongs to the methyltransferase superfamily. RsmH family.

It is found in the cytoplasm. It carries out the reaction cytidine(1402) in 16S rRNA + S-adenosyl-L-methionine = N(4)-methylcytidine(1402) in 16S rRNA + S-adenosyl-L-homocysteine + H(+). Specifically methylates the N4 position of cytidine in position 1402 (C1402) of 16S rRNA. The polypeptide is Ribosomal RNA small subunit methyltransferase H (Ehrlichia chaffeensis (strain ATCC CRL-10679 / Arkansas)).